A 315-amino-acid chain; its full sequence is Cobalamin biosynthesis protein CobD (315 aa).

5 helical membrane passes run 54–74 (GLLF…ILFL), 78–98 (IAYW…LAMT), 152–172 (ADGV…LALM), 203–223 (IANF…SFIL), and 295–315 (LLYT…LLLF).

The protein belongs to the CobD/CbiB family.

It is found in the cell membrane. It participates in cofactor biosynthesis; adenosylcobalamin biosynthesis. Functionally, converts cobyric acid to cobinamide by the addition of aminopropanol on the F carboxylic group. In Listeria monocytogenes serotype 4b (strain F2365), this protein is Cobalamin biosynthesis protein CobD.